Reading from the N-terminus, the 1327-residue chain is MTEASEDLAAGESKTAKSRRIIRRATRYVRLLVYAEPTTVDLILLTLGILAAIASGVPFPLMGIIFGQLVDNLNSASCNTDSQRGSAYQSEVNDKALKVVYVGIAYFVLVYIYIASWNLFGERLAQRLRERYFKSLLRQDASFFDNMPAGEAASRLTSDITTIQQGTSEKVGIVLNSVSFFITAYIIAFVKDAKLGGELVSLTPAYLLMSLVGGYYTQKYASAMLKNVAGASSVAMEALSNATIVHAFSANAQLESKFAGLLGNAKVAGIRKAISVAVQSGLLYFIAFSANGLAFWQGSKTIADAVASGNPGSSVGTTYTVIFLLVDGEIFNIKVSSIRQVAPFVQVFDAAGVTFESLEADINREPKIDGTVEGTENSLRNVSGNIELNNVSFAFPSRPDKPVLDNVSMSCAAGQHTAIVGLSGSGKSTVAGLIARLYDPTNGEVSFAGQNIKDLNVRSLRSNLSLVQQEPSLLDRSILENIALGLINSPSHSHLSPALLGGKLSDIATAVRNGRDLMEEAEIHGQETAEIIDMVRNAADLADASAFIGRLKDGYGTLVGSAGSLISGGQKQRISIARSLVKKPKLLILDEATAALDSTSQQRVQSAIEKVMSGRTLISIAHRLSTIKNADNIIVMNQGKVVEQGTHSELISSDGAYAGLVRLQNLNIRPEEENVSSESLATKDSYDNIIEKAAEASLDERRSLETSARKGEDNSDGINAKRSLSSTLKAVGPMLRPHMLFLFLALTSAFVVGGTYSASAVVFGNTIGGLSPCKTADSIRSAGKFYGLMFFILAIIEFFANLGSWSAFGWVAEKITYKVRVLSFRALMEQDLQWHQSDGRSPTVLLSIITQDGNALSGLTGSVVGTIIAILVNLVVAIALSHVIAWKIALVCLAVVPLMLGAGVMRVITMTQFQERHARAFEKSLGITVEAVNSIKTISALSLEHEILRTYRRSLKGPTMEIAQQSAYANLWLAISYGVSNFLYALAYWWGAKRIIAGDYSQTQFFIVLMALLVSAQLWGQMFTLAPDVSRAFTALARILNLLDLGSTKNLSGPCQHLKPGNDLEANAEPREKRPDQSQGGISVSLNNVKFSYPARQDVLVLDGLDIHIKPGQFAALVGPSGAGKSTIVSLIERLYTPTSGSVHIDGQDISAREGVSFRDNIAFVPQDSVLFEGTIRFNVALGARPGHKPTDAEIEEACRLANIHDTIVNLPEGYNTNCGPSGNQLSGGQKQRLAIARALVRKPQLLLLDESTSALDAESEQLLQAGLEKATKGMTVIAIAHRLYTIQKADVIFLIEDGRCTDKGTHAELVERSESYKINALHQAFE.

A run of 6 helical transmembrane segments spans residues 47 to 67 (LGIL…IIFG), 100 to 120 (VYVG…WNLF), 170 to 190 (KVGI…IAFV), 195 to 215 (LGGE…VGGY), 228 to 248 (VAGA…VHAF), and 276 to 296 (VAVQ…LAFW). Residues 47–326 (LGILAAIASG…TTYTVIFLLV (280 aa)) form the ABC transmembrane type-1 1 domain. Residues N381, N390, and N406 are each glycosylated (N-linked (GlcNAc...) asparagine). The region spanning 386-663 (IELNNVSFAF…DGAYAGLVRL (278 aa)) is the ABC transporter 1 domain. 421–428 (GLSGSGKS) is an ATP binding site. Residues N463 and N674 are each glycosylated (N-linked (GlcNAc...) asparagine). Helical transmembrane passes span 743-763 (FLAL…AVVF), 785-805 (FYGL…LGSW), 859-881 (LTGS…IALS), 888-910 (IALV…VITM), 971-991 (LWLA…YWWG), and 1005-1025 (FFIV…MFTL). An ABC transmembrane type-1 2 domain is found at 743 to 1031 (FLALTSAFVV…MFTLAPDVSR (289 aa)). The N-linked (GlcNAc...) asparagine glycan is linked to N1050. A disordered region spans residues 1054–1081 (PCQHLKPGNDLEANAEPREKRPDQSQGG). The ABC transporter 2 domain occupies 1084–1323 (VSLNNVKFSY…SESYKINALH (240 aa)). 1119 to 1126 (GPSGAGKS) is a binding site for ATP.

Belongs to the ABC transporter superfamily. ABCB family. Multidrug resistance exporter (TC 3.A.1.201) subfamily.

The protein localises to the membrane. ABC transporter; part of the gene cluster that mediates the biosynthesis of hydroxamate-containing siderophores that play a critical role in virulence via intracellular iron acquisition during macrophage infection. Probably involved in the excretion of the extracellular siderophores. The sequence is that of ABC transporter 1 from Ajellomyces capsulatus (Darling's disease fungus).